The sequence spans 186 residues: Ribosome-recycling factor (186 aa).

Belongs to the RRF family.

It localises to the cytoplasm. In terms of biological role, responsible for the release of ribosomes from messenger RNA at the termination of protein biosynthesis. May increase the efficiency of translation by recycling ribosomes from one round of translation to another. This chain is Ribosome-recycling factor, found in Rickettsia prowazekii (strain Madrid E).